The chain runs to 178 residues: MLLPNTNWFWYTHENELRLDLGDTLTFVAPFALKNLVNLPSDKQLFSLEDTEHYVALAESLDNSGLELSDGELVQILLNATAALKFHKPIGMKSWLYKTQSTSGVHYQLALLEPTDTAYPELGQVIVIEQDGACATCMLISNEFAVNSSKKFSKFEMIKVMNDRLIPCLVDIPVYKRA.

It belongs to the ZapC family. As to quaternary structure, interacts directly with FtsZ.

The protein resides in the cytoplasm. In terms of biological role, contributes to the efficiency of the cell division process by stabilizing the polymeric form of the cell division protein FtsZ. Acts by promoting interactions between FtsZ protofilaments and suppressing the GTPase activity of FtsZ. The polypeptide is Cell division protein ZapC (Pseudoalteromonas atlantica (strain T6c / ATCC BAA-1087)).